Here is a 421-residue protein sequence, read N- to C-terminus: Tyrosine--tRNA ligase 1 (421 aa).

Tyr35 contacts L-tyrosine. A 'HIGH' region motif is present at residues 40–49 (PTADSLHIGH). Residues Tyr170 and Gln174 each coordinate L-tyrosine. Positions 231-235 (KFGKT) match the 'KMSKS' region motif. Lys234 is a binding site for ATP. Residues 354–420 (LPLVEILVQS…GKKKYFLLTY (67 aa)) form the S4 RNA-binding domain.

The protein belongs to the class-I aminoacyl-tRNA synthetase family. TyrS type 1 subfamily. As to quaternary structure, homodimer.

Its subcellular location is the cytoplasm. It catalyses the reaction tRNA(Tyr) + L-tyrosine + ATP = L-tyrosyl-tRNA(Tyr) + AMP + diphosphate + H(+). Catalyzes the attachment of tyrosine to tRNA(Tyr) in a two-step reaction: tyrosine is first activated by ATP to form Tyr-AMP and then transferred to the acceptor end of tRNA(Tyr). The polypeptide is Tyrosine--tRNA ligase 1 (Bacillus licheniformis (strain ATCC 14580 / DSM 13 / JCM 2505 / CCUG 7422 / NBRC 12200 / NCIMB 9375 / NCTC 10341 / NRRL NRS-1264 / Gibson 46)).